The sequence spans 354 residues: 3-isopropylmalate dehydrogenase (354 aa).

74–87 (GPKWDDLPPEKRPE) contacts NAD(+). Substrate contacts are provided by arginine 95, arginine 105, arginine 134, and aspartate 219. Residues aspartate 219, aspartate 243, and aspartate 247 each contribute to the Mg(2+) site. An NAD(+)-binding site is contributed by 275-287 (GSAPDIAGKNIAN).

This sequence belongs to the isocitrate and isopropylmalate dehydrogenases family. LeuB type 1 subfamily. In terms of assembly, homodimer. It depends on Mg(2+) as a cofactor. The cofactor is Mn(2+).

The protein localises to the cytoplasm. The catalysed reaction is (2R,3S)-3-isopropylmalate + NAD(+) = 4-methyl-2-oxopentanoate + CO2 + NADH. It participates in amino-acid biosynthesis; L-leucine biosynthesis; L-leucine from 3-methyl-2-oxobutanoate: step 3/4. Functionally, catalyzes the oxidation of 3-carboxy-2-hydroxy-4-methylpentanoate (3-isopropylmalate) to 3-carboxy-4-methyl-2-oxopentanoate. The product decarboxylates to 4-methyl-2 oxopentanoate. This Thermotoga maritima (strain ATCC 43589 / DSM 3109 / JCM 10099 / NBRC 100826 / MSB8) protein is 3-isopropylmalate dehydrogenase (leuB).